Consider the following 191-residue polypeptide: UPF0398 protein LSEI_1479 (191 aa).

This sequence belongs to the UPF0398 family.

The sequence is that of UPF0398 protein LSEI_1479 from Lacticaseibacillus paracasei (strain ATCC 334 / BCRC 17002 / CCUG 31169 / CIP 107868 / KCTC 3260 / NRRL B-441) (Lactobacillus paracasei).